Reading from the N-terminus, the 337-residue chain is MKAVAINGYGTVGKRVADAIAQQDDMKVIGVSKTRPDFEARMALKKGYDLYVAIPERVKLFEKAGIEVAGTVDDMLDEADIVIDCTPEGIGAKNLKMYKEKGIKAIFQGGEKHEDIGLSFNSLSNYEESYGKDYTRVVSCNTTGLCRTLKPLHDSFGIKKVRAVIVRRGADPAQVSKGPINAIIPNPPKLPSHHGPDVKTVLDINIDTMAVIVPTTLMHQHNVMVEVEETPTVDDIIDVFEDTPRVILISAEDGLTSTAEIMEYAKELGRSRNDLFEIPVWRESITVVDNEIYYMQAVHQESDIVPENVDAVRAILEMEEDKYKSINKTNKAMNILQ.

NADP(+)-binding positions include 11–12 (TV), 34–35 (TR), and glycine 110. 139–141 (SCN) contacts D-glyceraldehyde 3-phosphate. Cysteine 140 functions as the Nucleophile in the catalytic mechanism. Residue aspartate 171 participates in NADP(+) binding. A D-glyceraldehyde 3-phosphate-binding site is contributed by 194–195 (HG). Glutamine 300 contributes to the NADP(+) binding site.

It belongs to the glyceraldehyde-3-phosphate dehydrogenase family. Homotetramer.

The protein localises to the cytoplasm. It carries out the reaction D-glyceraldehyde 3-phosphate + phosphate + NADP(+) = (2R)-3-phospho-glyceroyl phosphate + NADPH + H(+). The enzyme catalyses D-glyceraldehyde 3-phosphate + phosphate + NAD(+) = (2R)-3-phospho-glyceroyl phosphate + NADH + H(+). Its pathway is carbohydrate degradation; glycolysis; pyruvate from D-glyceraldehyde 3-phosphate: step 1/5. Its function is as follows. Exhibits a dual-cofactor specificity, with a marked preference for NADP(+) over NAD(+). The sequence is that of Glyceraldehyde-3-phosphate dehydrogenase (gap) from Methanothermus fervidus.